Reading from the N-terminus, the 278-residue chain is MTTRIDTRFGELKQQGRPALVTFVMAGDPDLDTSLQILKVLPAAGADVIEIGMPFTDPMADGPAIQAAGLRALKAGTTLKKTLGLVRDFRATDNATPLVLMGYYNPIYIYGVDAFLADAKAAGVDGLIIVDLPPEEDEELCLPAMKAGLNFIRLATPTTDEKRLPAVLANTSGFVYYVSITGITGSASADASAVGAAVQRIKRHTNLPVCVGFGIRTPDAAQAIAAQANGAVVGSALIDALKASLNAEGRATKATVGAVADLVASLAAGVRGAKQAAE.

Active-site proton acceptor residues include Glu-50 and Asp-61.

The protein belongs to the TrpA family. In terms of assembly, tetramer of two alpha and two beta chains.

The enzyme catalyses (1S,2R)-1-C-(indol-3-yl)glycerol 3-phosphate + L-serine = D-glyceraldehyde 3-phosphate + L-tryptophan + H2O. The protein operates within amino-acid biosynthesis; L-tryptophan biosynthesis; L-tryptophan from chorismate: step 5/5. The alpha subunit is responsible for the aldol cleavage of indoleglycerol phosphate to indole and glyceraldehyde 3-phosphate. The chain is Tryptophan synthase alpha chain from Rhodopseudomonas palustris (strain ATCC BAA-98 / CGA009).